Reading from the N-terminus, the 348-residue chain is Uroporphyrinogen decarboxylase (348 aa).

Substrate contacts are provided by residues 24–28 (RQAGR), D73, Y150, S205, and H324.

This sequence belongs to the uroporphyrinogen decarboxylase family. In terms of assembly, homodimer.

The protein resides in the cytoplasm. It carries out the reaction uroporphyrinogen III + 4 H(+) = coproporphyrinogen III + 4 CO2. It functions in the pathway porphyrin-containing compound metabolism; protoporphyrin-IX biosynthesis; coproporphyrinogen-III from 5-aminolevulinate: step 4/4. Functionally, catalyzes the decarboxylation of four acetate groups of uroporphyrinogen-III to yield coproporphyrinogen-III. In Roseiflexus sp. (strain RS-1), this protein is Uroporphyrinogen decarboxylase.